The sequence spans 266 residues: Cyclin-C (266 aa).

Residues 47–151 (IIQVLGEQLK…LLENLDCCLI (105 aa)) enclose the Cyclin N-terminal domain.

This sequence belongs to the cyclin family. Cyclin C subfamily. As to quaternary structure, component of the Cdk8 module of the Mediator complex.

Its subcellular location is the nucleus. Functionally, component of the Mediator complex, a coactivator involved in regulated gene transcription of nearly all RNA polymerase II-dependent genes. Mediator functions as a bridge to convey information from gene-specific regulatory proteins to the basal RNA polymerase II transcription machinery. Mediator is recruited to promoters by direct interactions with regulatory proteins and serves as a scaffold for the assembly of a functional preinitiation complex with RNA polymerase II and the general transcription factors. Binds to and activates cyclin-dependent kinase Cdk8 that phosphorylates the CTD (C-terminal domain) of the large subunit of RNA polymerase II (RNAp II), which may inhibit the formation of a transcription initiation complex. This chain is Cyclin-C (CycC), found in Anopheles gambiae (African malaria mosquito).